The primary structure comprises 506 residues: MPDTTPQLRLYNTLTRTKEAFAPIDAKNVRMYVCGPTVYDFAHIGNARPVIVFDVLFRLLRHVYGAQHVTYARNITDVDDKINARAARDYPDLPFNEAIRKVTESTNAQFQADVTALGNLQPTVQPRATEHMDEMRAMIDRLVQRGVAYVAQDHVLFSPSAMNARKGPRYGALARRSLDEMLAGARVDVASYKRDEMDFVLWKPSKKGEPGWPSPAGIETLGRPGWHIECSAMSMAKLLEPFGGGLKCDDPERNQFDIHGGGIDLVFPHHENEIAQSCCALGTERMANIWMHNGFLQVEGQKMSKSLGNFITIRDVLNDGLPQLGEWGDNTVRDHWAGLAARLSMLQTHYREPINWTAQRLAESADELHRWYGLLRDEGFGAPEKLSHASAVAAALCDDLNSWAAITALRQAFKVRDVAALGEGMALMGLLDPYFVTASDVPIFARADVDASAIAARIAERLNFINAKNWAEADRIRDELLQEGVQLKDSKDPATGERITTWDVVG.

Cysteine 34 provides a ligand contact to Zn(2+). A 'HIGH' region motif is present at residues 36–46; that stretch reads PTVYDFAHIGN. Residues cysteine 230, histidine 269, and glutamate 273 each contribute to the Zn(2+) site. Residues 302–306 carry the 'KMSKS' region motif; that stretch reads KMSKS. Lysine 305 is a binding site for ATP.

The protein belongs to the class-I aminoacyl-tRNA synthetase family. In terms of assembly, monomer. Zn(2+) is required as a cofactor.

It is found in the cytoplasm. The enzyme catalyses tRNA(Cys) + L-cysteine + ATP = L-cysteinyl-tRNA(Cys) + AMP + diphosphate. This Brucella abortus (strain S19) protein is Cysteine--tRNA ligase.